We begin with the raw amino-acid sequence, 479 residues long: Glucan 1,3-beta-glucosidase 2 (479 aa).

The N-terminal stretch at 1–21 is a signal peptide; the sequence is MMLFLIHLMALCCMFVAEVAC. Asn-25, Asn-29, Asn-63, Asn-104, Asn-187, and Asn-193 each carry an N-linked (GlcNAc...) asparagine glycan. Catalysis depends on Glu-227, which acts as the Proton donor. Asn-254, Asn-285, and Asn-288 each carry an N-linked (GlcNAc...) asparagine glycan. His-306 (nucleophile) is an active-site residue. N-linked (GlcNAc...) asparagine glycans are attached at residues Asn-318 and Asn-451. Ser-456 carries the GPI-anchor amidated serine lipid modification. The propeptide at 457 to 479 is removed in mature form; sequence SASAIASNKMTLLLAFLLVILVI.

Belongs to the glycosyl hydrolase 5 (cellulase A) family. In terms of processing, predicted to be a substrate for cleavage by KEX2.

It localises to the cell membrane. The protein resides in the secreted. It catalyses the reaction Successive hydrolysis of beta-D-glucose units from the non-reducing ends of (1-&gt;3)-beta-D-glucans, releasing alpha-glucose.. Beta-glucanases participate in the metabolism of beta-glucan, the main structural component of the cell wall. EXG2 is not heavily involved in the exoglucanase function of the adhesion process. The protein is Glucan 1,3-beta-glucosidase 2 (EXG2) of Candida albicans (strain SC5314 / ATCC MYA-2876) (Yeast).